The primary structure comprises 310 residues: tRNA-cytidine(32) 2-sulfurtransferase (310 aa).

Positions 45 to 50 (SGGKDS) match the PP-loop motif motif. [4Fe-4S] cluster contacts are provided by cysteine 120, cysteine 123, and cysteine 211.

The protein belongs to the TtcA family. As to quaternary structure, homodimer. It depends on Mg(2+) as a cofactor. [4Fe-4S] cluster is required as a cofactor.

It localises to the cytoplasm. The enzyme catalyses cytidine(32) in tRNA + S-sulfanyl-L-cysteinyl-[cysteine desulfurase] + AH2 + ATP = 2-thiocytidine(32) in tRNA + L-cysteinyl-[cysteine desulfurase] + A + AMP + diphosphate + H(+). It participates in tRNA modification. Catalyzes the ATP-dependent 2-thiolation of cytidine in position 32 of tRNA, to form 2-thiocytidine (s(2)C32). The sulfur atoms are provided by the cysteine/cysteine desulfurase (IscS) system. The polypeptide is tRNA-cytidine(32) 2-sulfurtransferase (Shewanella baltica (strain OS155 / ATCC BAA-1091)).